The sequence spans 235 residues: Small ribosomal subunit protein uS2c (235 aa).

It belongs to the universal ribosomal protein uS2 family.

The protein localises to the plastid. Its subcellular location is the chloroplast. This is Small ribosomal subunit protein uS2c (rps2) from Guillardia theta (Cryptophyte).